The chain runs to 433 residues: MVNVVLGSQWGDEGKGKLVDLLVGKYDIVARCAGGNNAGHTIVVNGVKYDFHMLPSGLVNPNCQNLLGNGVVIHVPSFFKELETLEAKGLKNARSRLFVSSRAHLVFDFHQVTDKLRELELSGRSKDGKNIGTTGKGIGPTYSTKASRSGLRVHHLVNDQPGAWEEFVARYKRLLETRRQRYGDFEYDFEAKPAEYKKLREQLKPFVVDSVVFMHNAIEAKKKILVEGANALMLDIDFGTYPYVTSSNTGIGGVLTGLGIPPRTIDEIYGVVKAYTTRVGEGPFPTEQLNENGEKLQTIGAEFGVTTGRKRRCGWLDLVVLKYSTLINGYTSLNITKLDVLDTFKEIPVGISYSIQGKKLDLFPEDLNILGKVEVEYKVLPGWDQDITKITKYEDLPENAKKYLKYIENFVGVPVEWVGTGPARESMLHKEIK.

GTP contacts are provided by residues 11–17 (GDEGKGK) and 39–41 (GHT). Asp12 (proton acceptor) is an active-site residue. Residues Asp12 and Gly39 each contribute to the Mg(2+) site. Residues 12–15 (DEGK), 37–40 (NAGH), Thr134, Arg148, Asn230, Thr245, and Arg309 each bind IMP. Residue His40 is the Proton donor of the active site. Residue 305 to 311 (VTTGRKR) coordinates substrate. GTP contacts are provided by residues Arg311, 337–339 (KLD), and 419–421 (GTG).

Belongs to the adenylosuccinate synthetase family. Homodimer. It depends on Mg(2+) as a cofactor.

Its subcellular location is the cytoplasm. It catalyses the reaction IMP + L-aspartate + GTP = N(6)-(1,2-dicarboxyethyl)-AMP + GDP + phosphate + 2 H(+). It participates in purine metabolism; AMP biosynthesis via de novo pathway; AMP from IMP: step 1/2. Plays an important role in the de novo pathway and in the salvage pathway of purine nucleotide biosynthesis. Catalyzes the first committed step in the biosynthesis of AMP from IMP. In Saccharomyces cerevisiae (strain Lalvin EC1118 / Prise de mousse) (Baker's yeast), this protein is Adenylosuccinate synthetase.